The following is a 715-amino-acid chain: Polyphosphate kinase (715 aa).

Asn60 provides a ligand contact to ATP. 2 residues coordinate Mg(2+): Arg380 and Arg410. His440 serves as the catalytic Phosphohistidine intermediate. ATP is bound by residues Tyr473, Arg569, and His597.

It belongs to the polyphosphate kinase 1 (PPK1) family. Requires Mg(2+) as cofactor. Post-translationally, an intermediate of this reaction is the autophosphorylated ppk in which a phosphate is covalently linked to a histidine residue through a N-P bond.

It catalyses the reaction [phosphate](n) + ATP = [phosphate](n+1) + ADP. Catalyzes the reversible transfer of the terminal phosphate of ATP to form a long-chain polyphosphate (polyP). This chain is Polyphosphate kinase, found in Erythrobacter litoralis (strain HTCC2594).